We begin with the raw amino-acid sequence, 63 residues long: Venom peptide U-reduvitoxin-Pp19 (63 aa).

Residues 1-23 (MSPYSILFVVVIALCLLPESIVG) form the signal peptide. 3 disulfides stabilise this stretch: C15/C62, C25/C53, and C30/C61.

As to expression, hemolymph (at protein level). Also weakly expressed by the venom gland (at protein level).

The protein resides in the secreted. Its function is as follows. Toxin with insecticidal activity. High doses of recombinant toxin causes impaired motor behavior of D.melanogaster, which progress slowly to paralysis and death after several hours. This chain is Venom peptide U-reduvitoxin-Pp19, found in Pristhesancus plagipennis (Common assassin bug).